The sequence spans 226 residues: Uridylate kinase (226 aa).

6-10 (KISGK) provides a ligand contact to ATP. Residue Gly43 participates in UMP binding. ATP contacts are provided by Gly44 and Arg48. UMP contacts are provided by residues Asp65 and 113–119 (FQPGQST). Residues Thr139, Asn140, Tyr145, and Asp148 each contribute to the ATP site.

The protein belongs to the UMP kinase family. Homohexamer.

Its subcellular location is the cytoplasm. The catalysed reaction is UMP + ATP = UDP + ADP. The protein operates within pyrimidine metabolism; CTP biosynthesis via de novo pathway; UDP from UMP (UMPK route): step 1/1. Inhibited by UTP. Catalyzes the reversible phosphorylation of UMP to UDP. This is Uridylate kinase from Sulfurisphaera tokodaii (strain DSM 16993 / JCM 10545 / NBRC 100140 / 7) (Sulfolobus tokodaii).